Here is a 289-residue protein sequence, read N- to C-terminus: Phosphatidylglycerol--prolipoprotein diacylglyceryl transferase (289 aa).

A run of 7 helical transmembrane segments spans residues 23–43, 61–81, 99–119, 125–145, 199–219, 226–246, and 259–279; these read ALHWYGLMYLVGFVFAMWLAV, LLYMGFLGVFVGGRLGYVLFY, GGMSFHGGLMGVICVMLWFAH, FFQVADFIAPLIPFGLGAGRL, SQLYQMMLEGVALFIILNLFI, GSVSGLFLIGYGTFRIITEFF, and LFSMGQILSLPMVIAGILMMV. An a 1,2-diacyl-sn-glycero-3-phospho-(1'-sn-glycerol)-binding site is contributed by R144.

Belongs to the Lgt family.

The protein resides in the cell inner membrane. It carries out the reaction L-cysteinyl-[prolipoprotein] + a 1,2-diacyl-sn-glycero-3-phospho-(1'-sn-glycerol) = an S-1,2-diacyl-sn-glyceryl-L-cysteinyl-[prolipoprotein] + sn-glycerol 1-phosphate + H(+). It functions in the pathway protein modification; lipoprotein biosynthesis (diacylglyceryl transfer). Functionally, catalyzes the transfer of the diacylglyceryl group from phosphatidylglycerol to the sulfhydryl group of the N-terminal cysteine of a prolipoprotein, the first step in the formation of mature lipoproteins. The polypeptide is Phosphatidylglycerol--prolipoprotein diacylglyceryl transferase (Pectobacterium carotovorum subsp. carotovorum (strain PC1)).